The chain runs to 59 residues: Large ribosomal subunit protein bL32 (59 aa).

A disordered region spans residues Met1–Asp59. A compositionally biased stretch (basic residues) spans Arg7–Arg16.

This sequence belongs to the bacterial ribosomal protein bL32 family.

This Hahella chejuensis (strain KCTC 2396) protein is Large ribosomal subunit protein bL32.